Here is a 90-residue protein sequence, read N- to C-terminus: uncharacterized protein (90 aa).

This is an uncharacterized protein from Methanocaldococcus jannaschii (strain ATCC 43067 / DSM 2661 / JAL-1 / JCM 10045 / NBRC 100440) (Methanococcus jannaschii).